Consider the following 751-residue polypeptide: Glutamate carboxypeptidase 2 (751 aa).

Over 1-19 (MWNPLHETDSTSVAWRRPR) the chain is Cytoplasmic. The residue at position 10 (Ser10) is a Phosphoserine. Residues 20 to 43 (WLCAGALVLAAGLFVLGFLFGWFI) traverse the membrane as a helical; Signal-anchor for type II membrane protein segment. Over 44-750 (KSPNEAANIS…QAAAGTLREV (707 aa)) the chain is Extracellular. Asn51, Asn77, Asn122, Asn141, Asn154, and Asn196 each carry an N-linked (GlcNAc...) asparagine glycan. Substrate is bound by residues Arg211 and Asn258. Positions 270 and 273 each coordinate Ca(2+). The NAALADase stretch occupies residues 275–588 (ANEYAYRLQI…QVRGGIVFEL (314 aa)). N-linked (GlcNAc...) asparagine glycosylation is present at Asn337. His378 and Asp388 together coordinate Zn(2+). Glu425 contributes to the substrate binding site. Catalysis depends on Glu425, which acts as the Nucleophile; for NAALADase activity. Zn(2+) is bound at residue Glu426. Ca(2+) contacts are provided by Glu434 and Glu437. Residue Asp454 coordinates Zn(2+). 2 N-linked (GlcNAc...) asparagine glycosylation sites follow: Asn460 and Asn477. Residues 518 to 519 (SG), Asn520, 535 to 537 (RAR), Tyr553, and 553 to 554 (YH) each bind substrate. A Zn(2+)-binding site is contributed by His554. N-linked (GlcNAc...) asparagine glycosylation is present at Asn614. Ser629 acts as the Charge relay system in catalysis. 2 N-linked (GlcNAc...) asparagine glycosylation sites follow: Asn639 and Asn646. Active-site charge relay system residues include Asp667 and His690. 700-701 (KY) contacts substrate.

The protein belongs to the peptidase M28 family. M28B subfamily. Homodimer. Zn(2+) is required as a cofactor. As to expression, high expression in the duodenum and in the jejunum brush-border membrane. Weak expression in kidney.

The protein localises to the cell membrane. The enzyme catalyses Release of an unsubstituted, C-terminal glutamyl residue, typically from Ac-Asp-Glu or folylpoly-gamma-glutamates.. With respect to regulation, the NAALADase activity is inhibited by quisqualic acid, beta-NAAG and 2-(phosphonomethyl) pentanedioic acid (PMPA). Ethanol ingestion decreases the folate hydrolase activity by 50%. Its function is as follows. Has both folate hydrolase and N-acetylated-alpha-linked-acidic dipeptidase (NAALADase) activity. Has a preference for tri-alpha-glutamate peptides. In the intestine, required for the uptake of folate. In the brain, modulates excitatory neurotransmission through the hydrolysis of the neuropeptide, N-aceylaspartylglutamate (NAAG), thereby releasing glutamate. Functionally, also exhibits a dipeptidyl-peptidase IV type activity. In vitro, cleaves Gly-Pro-AMC. This chain is Glutamate carboxypeptidase 2 (FOLH1), found in Sus scrofa (Pig).